The chain runs to 320 residues: Beta-ketoacyl-[acyl-carrier-protein] synthase III (320 aa).

Catalysis depends on residues Cys-112 and His-245. Residues 246-250 (QANIR) are ACP-binding. Asn-275 is a catalytic residue.

Belongs to the thiolase-like superfamily. FabH family. As to quaternary structure, homodimer.

Its subcellular location is the cytoplasm. The catalysed reaction is malonyl-[ACP] + acetyl-CoA + H(+) = 3-oxobutanoyl-[ACP] + CO2 + CoA. It participates in lipid metabolism; fatty acid biosynthesis. Catalyzes the condensation reaction of fatty acid synthesis by the addition to an acyl acceptor of two carbons from malonyl-ACP. Catalyzes the first condensation reaction which initiates fatty acid synthesis and may therefore play a role in governing the total rate of fatty acid production. Possesses both acetoacetyl-ACP synthase and acetyl transacylase activities. Its substrate specificity determines the biosynthesis of branched-chain and/or straight-chain of fatty acids. The chain is Beta-ketoacyl-[acyl-carrier-protein] synthase III from Streptococcus thermophilus (strain CNRZ 1066).